Consider the following 2312-residue polypeptide: Protein Ycf2 (2312 aa).

1630 to 1637 (GSIGTGRS) contributes to the ATP binding site.

It belongs to the Ycf2 family.

Its subcellular location is the plastid. The protein localises to the chloroplast stroma. Functionally, probable ATPase of unknown function. Its presence in a non-photosynthetic plant (Epifagus virginiana) and experiments in tobacco indicate that it has an essential function which is probably not related to photosynthesis. The chain is Protein Ycf2 from Manihot esculenta (Cassava).